A 446-amino-acid polypeptide reads, in one-letter code: Maltoporin (446 aa).

The signal sequence occupies residues 1–25; it reads MMITLRKLPLAVAVAAGVMSAQAMA.

The protein belongs to the porin LamB (TC 1.B.3) family. As to quaternary structure, homotrimer formed of three 18-stranded antiparallel beta-barrels, containing three independent channels.

It localises to the cell outer membrane. The enzyme catalyses beta-maltose(in) = beta-maltose(out). Functionally, involved in the transport of maltose and maltodextrins. This is Maltoporin from Escherichia coli (strain K12 / MC4100 / BW2952).